The primary structure comprises 308 residues: ADP-L-glycero-D-manno-heptose-6-epimerase (308 aa).

NADP(+) contacts are provided by residues 10–11 (MI), 31–32 (DN), lysine 38, lysine 53, 75–79 (EGACS), and asparagine 92. Catalysis depends on tyrosine 140, which acts as the Proton acceptor. Lysine 144 is a binding site for NADP(+). Asparagine 169 serves as a coordination point for substrate. NADP(+) contacts are provided by valine 170 and lysine 178. Lysine 178 functions as the Proton acceptor in the catalytic mechanism. Substrate-binding positions include serine 180, histidine 187, 201–204 (FEGS), arginine 209, and tyrosine 272.

Belongs to the NAD(P)-dependent epimerase/dehydratase family. HldD subfamily. As to quaternary structure, homopentamer. NADP(+) serves as cofactor.

It catalyses the reaction ADP-D-glycero-beta-D-manno-heptose = ADP-L-glycero-beta-D-manno-heptose. It participates in nucleotide-sugar biosynthesis; ADP-L-glycero-beta-D-manno-heptose biosynthesis; ADP-L-glycero-beta-D-manno-heptose from D-glycero-beta-D-manno-heptose 7-phosphate: step 4/4. Functionally, catalyzes the interconversion between ADP-D-glycero-beta-D-manno-heptose and ADP-L-glycero-beta-D-manno-heptose via an epimerization at carbon 6 of the heptose. This Actinobacillus pleuropneumoniae serotype 5b (strain L20) protein is ADP-L-glycero-D-manno-heptose-6-epimerase.